The sequence spans 273 residues: Putative pyruvate, phosphate dikinase regulatory protein (273 aa).

Residue 153–160 (GVSRTSKS) participates in ADP binding.

The protein belongs to the pyruvate, phosphate/water dikinase regulatory protein family. PDRP subfamily.

It carries out the reaction N(tele)-phospho-L-histidyl/L-threonyl-[pyruvate, phosphate dikinase] + ADP = N(tele)-phospho-L-histidyl/O-phospho-L-threonyl-[pyruvate, phosphate dikinase] + AMP + H(+). It catalyses the reaction N(tele)-phospho-L-histidyl/O-phospho-L-threonyl-[pyruvate, phosphate dikinase] + phosphate + H(+) = N(tele)-phospho-L-histidyl/L-threonyl-[pyruvate, phosphate dikinase] + diphosphate. In terms of biological role, bifunctional serine/threonine kinase and phosphorylase involved in the regulation of the pyruvate, phosphate dikinase (PPDK) by catalyzing its phosphorylation/dephosphorylation. This is Putative pyruvate, phosphate dikinase regulatory protein from Ehrlichia ruminantium (strain Gardel).